Reading from the N-terminus, the 136-residue chain is Large-conductance mechanosensitive channel (136 aa).

2 helical membrane-spanning segments follow: residues 10-30 and 76-96; these read FAMR…AAFG and GVFI…FMAI.

The protein belongs to the MscL family. As to quaternary structure, homopentamer.

The protein resides in the cell inner membrane. Functionally, channel that opens in response to stretch forces in the membrane lipid bilayer. May participate in the regulation of osmotic pressure changes within the cell. The protein is Large-conductance mechanosensitive channel of Shigella boydii serotype 18 (strain CDC 3083-94 / BS512).